The following is a 217-amino-acid chain: Adenylate kinase (217 aa).

10 to 15 is a binding site for ATP; sequence GAGKGT. An NMP region spans residues 30–59; sequence STGDIFRKNISDKTPLGIEAKEYLDKGQLV. Residues threonine 31, arginine 36, 57 to 59, 85 to 88, and glutamine 92 each bind AMP; these read QLV and GFPR. An LID region spans residues 126 to 163; that stretch reads GRRICPSCGASYHVKFNPPKLKDKCDICNNDIIQRKDD. Arginine 127 lines the ATP pocket. Positions 130 and 133 each coordinate Zn(2+). 136-137 is a binding site for ATP; it reads SY. Zn(2+) contacts are provided by cysteine 150 and cysteine 153. Arginine 160 and arginine 171 together coordinate AMP. Glycine 199 lines the ATP pocket.

Belongs to the adenylate kinase family. In terms of assembly, monomer.

The protein localises to the cytoplasm. The catalysed reaction is AMP + ATP = 2 ADP. Its pathway is purine metabolism; AMP biosynthesis via salvage pathway; AMP from ADP: step 1/1. Catalyzes the reversible transfer of the terminal phosphate group between ATP and AMP. Plays an important role in cellular energy homeostasis and in adenine nucleotide metabolism. This chain is Adenylate kinase, found in Clostridium kluyveri (strain NBRC 12016).